A 252-amino-acid polypeptide reads, in one-letter code: Triosephosphate isomerase (252 aa).

9–11 contacts substrate; that stretch reads NWK. Catalysis depends on histidine 100, which acts as the Electrophile. Glutamate 171 serves as the catalytic Proton acceptor. Substrate-binding positions include glycine 177, serine 216, and 237–238; that span reads GG.

Belongs to the triosephosphate isomerase family. As to quaternary structure, homodimer.

The protein resides in the cytoplasm. It catalyses the reaction D-glyceraldehyde 3-phosphate = dihydroxyacetone phosphate. It participates in carbohydrate biosynthesis; gluconeogenesis. Its pathway is carbohydrate degradation; glycolysis; D-glyceraldehyde 3-phosphate from glycerone phosphate: step 1/1. Its function is as follows. Involved in the gluconeogenesis. Catalyzes stereospecifically the conversion of dihydroxyacetone phosphate (DHAP) to D-glyceraldehyde-3-phosphate (G3P). This chain is Triosephosphate isomerase, found in Polynucleobacter asymbioticus (strain DSM 18221 / CIP 109841 / QLW-P1DMWA-1) (Polynucleobacter necessarius subsp. asymbioticus).